The following is a 389-amino-acid chain: Succinyl-diaminopimelate desuccinylase (389 aa).

Zn(2+) is bound at residue H72. D74 is a catalytic residue. D105 contacts Zn(2+). Catalysis depends on E144, which acts as the Proton acceptor. Zn(2+) is bound by residues E145, E173, and H362.

Belongs to the peptidase M20A family. DapE subfamily. As to quaternary structure, homodimer. The cofactor is Zn(2+). It depends on Co(2+) as a cofactor.

It carries out the reaction N-succinyl-(2S,6S)-2,6-diaminopimelate + H2O = (2S,6S)-2,6-diaminopimelate + succinate. It functions in the pathway amino-acid biosynthesis; L-lysine biosynthesis via DAP pathway; LL-2,6-diaminopimelate from (S)-tetrahydrodipicolinate (succinylase route): step 3/3. In terms of biological role, catalyzes the hydrolysis of N-succinyl-L,L-diaminopimelic acid (SDAP), forming succinate and LL-2,6-diaminopimelate (DAP), an intermediate involved in the bacterial biosynthesis of lysine and meso-diaminopimelic acid, an essential component of bacterial cell walls. The sequence is that of Succinyl-diaminopimelate desuccinylase from Nitrobacter hamburgensis (strain DSM 10229 / NCIMB 13809 / X14).